The following is a 466-amino-acid chain: MSIAQLFNQSWVEKSKYVPVRLSDEERKILSLLEAALEVIDYTGHVDIISYTTRTKLMVKYLNEMCSIVMGLVTAMDIKAGRDLLIGRDHKSNARFFQTVFEIGRRYKIMNPEKMRATYGAVMYMCQDSLIPDVRSQLGFDFVSPIKTVYNVLEKHKLLGLLEEKQLLNNLLKQSDPQSNANAKAELLKEREEASETLLKKYNPGKDEKLQKVLTDCFASLADHEAFLLANRNPVEKMRAYLHKFFNPHDTKNGSLKIGYMTGAKLNHDHKTQFFYVDQSLVFWSCMMDQMFLLWLESDASLLDKHSRYFISDTGQGLNRVQLCPLVRSTVTRILSSVQKQQEIPWMGSSVIHLGDRDVPNALMFIDKYRQVPHILAPLVKVLQQLEFLRDPYLVQYIENEYGSVNGLQKTILLDFFRHGFNGQGSDGGSCIDGRLTSAWNWTNEITKKKYYRILLMSGFLNFEGI.

It belongs to the UPF0652 family.

It is found in the cytoplasm. The protein localises to the nucleus. The protein is UPF0652 protein C16A11.03c of Schizosaccharomyces pombe (strain 972 / ATCC 24843) (Fission yeast).